Reading from the N-terminus, the 200-residue chain is Cleavage and polyadenylation specificity factor subunit 5 (200 aa).

The 126-residue stretch at 45-170 (LRKAVEGIII…LSLIAVSLYE (126 aa)) folds into the Nudix hydrolase domain. Residues 70-72 (NYF) form an interaction with RNA region. A Nudix box motif is present at residues 77 to 98 (GKLKPGENEIDGLIRKLTKKLS).

Belongs to the Nudix hydrolase family. CPSF5 subfamily. Homodimer (via N- and C-terminus); binds RNA as homodimer. Component of the cleavage factor Im (CFIm) complex.

The protein resides in the nucleus. It localises to the cytoplasm. Component of the cleavage factor Im (CFIm) complex that functions as an activator of the pre-mRNA 3'-end cleavage and polyadenylation processing required for the maturation of pre-mRNA into functional mRNAs. CFIm contributes to the recruitment of multiprotein complexes on specific sequences on the pre-mRNA 3'-end, so called cleavage and polyadenylation signals (pA signals). Most pre-mRNAs contain multiple pA signals, resulting in alternative cleavage and polyadenylation (APA) producing mRNAs with variable 3'-end formation. The CFIm complex acts as a key regulator of cleavage and polyadenylation site choice during APA through its binding to 5'-UGUA-3' elements localized in the 3'-untranslated region (UTR) for a huge number of pre-mRNAs. Binds to 5'-UGUA-3' elements localized upstream of pA signals that act as enhancers of pre-mRNA 3'-end processing. The homodimer mediates simultaneous sequence-specific recognition of two 5'-UGUA-3' elements within the pre-mRNA. Plays a role in somatic cell fate transitions and pluripotency by regulating widespread changes in gene expression through an APA-dependent function. Binds to chromatin. This chain is Cleavage and polyadenylation specificity factor subunit 5, found in Dictyostelium discoideum (Social amoeba).